The sequence spans 200 residues: Serine/arginine-rich splicing factor RSZ22 (200 aa).

One can recognise an RRM domain in the interval 2–71 (SRVYVGNLDP…NGWRVEQSHN (70 aa)). A compositionally biased stretch (basic and acidic residues) spans 62–83 (NGWRVEQSHNRGERGGGGRGGD). Disordered stretches follow at residues 62–97 (NGWRVEQSHNRGERGGGGRGGDRGGGGGGRGGRGGS) and 112–200 (RECR…RSRS). The span at 84 to 96 (RGGGGGGRGGRGG) shows a compositional bias: gly residues. The segment at 99–116 (LKCYECGETGHFARECRN) adopts a CCHC-type zinc-finger fold. Positions 120–137 (TGRRRSKSRSRTPPRYRR) are enriched in basic residues. S138, S147, S152, S160, S162, S174, and S200 each carry phosphoserine. The span at 138–150 (SPSYGRRSYSPRA) shows a compositional bias: low complexity. Residues 151–166 (RSPPPPRRRSPSPPPA) show a composition bias toward pro residues.

This sequence belongs to the splicing factor SR family. RSZ subfamily. As to quaternary structure, component of the spliceosome. Interacts with AFC2, RS2Z33 and RNU1. Post-translationally, extensively phosphorylated on serine residues in the RS domain. Phosphorylated by AFC2. Expressed in primary and lateral roots, stems, petioles, abaxial and adaxial epidermis cells, trichomes, unopened flowers, anther filaments, anthers, stigma, pollen, pollen tube, ovule funiculi, integuments, embryo sac and developing seeds.

It localises to the nucleus speckle. It is found in the nucleus. Its subcellular location is the nucleolus. The protein resides in the nucleoplasm. The protein localises to the cytoplasm. In terms of biological role, sequence-specific RNA-binding protein probably involved in pre-mRNA splicing. In vitro, can complement efficiently splicing-deficient mammalian SRSF7-depleted HeLa cell extract. The sequence is that of Serine/arginine-rich splicing factor RSZ22 (RSZ22) from Arabidopsis thaliana (Mouse-ear cress).